A 93-amino-acid chain; its full sequence is Transcription factor RADIALIS (93 aa).

An SANT domain is found at Gly-6–Lys-61.

As to expression, specifically expressed in the dorsal region of developing flowers.

The protein localises to the nucleus. In terms of biological role, involved in the dorsovental asymmetry of flowers. Promotes dorsal identity. In Antirrhinum majus (Garden snapdragon), this protein is Transcription factor RADIALIS (RAD).